A 336-amino-acid polypeptide reads, in one-letter code: MIDGYSPVLQSLLGTLLTWGLTAAGSALVFIFSSGQRQILDGSLGFAAGVMLAASYWSLLAPAIEMAENSNQYGSFAFVPAAVGFLVGAGFVYLADQLMPALGFSEDPYSIATLNQDSKPIKEKDEGDLYEDKELSIRIGRGGFHQDKIENGDVYQRKRGTVSPLAEDFSMLNPREAAHKGGSSWRRIMLLILAITIHNIPEGLAVGVGFGAIGKTPSATFENARNLALGIGIQNFPEGLAVSLPLRGAGVSTWKAFWYGQLSGMVEPIAGLLGTIAISLAEPLLPYALAFAAGAMVYVVTDDIIPEAQACGNGKLASWTCIFGFIVMMSLDVGLG.

The next 7 membrane-spanning stretches (helical) occupy residues 12 to 32, 44 to 64, 75 to 95, 188 to 208, 258 to 278, 280 to 300, and 316 to 336; these read LLGTLLTWGLTAAGSALVFIF, LGFAAGVMLAASYWSLLAPAI, SFAFVPAAVGFLVGAGFVYLA, IMLLILAITIHNIPEGLAVGV, WYGQLSGMVEPIAGLLGTIAI, LAEPLLPYALAFAAGAMVYVV, and LASWTCIFGFIVMMSLDVGLG.

The protein belongs to the ZIP transporter (TC 2.A.5) family.

The protein resides in the cell membrane. The protein localises to the nucleus. It is found in the cytoplasm. Its subcellular location is the golgi apparatus. Functions as a cellular zinc transporter. The protein is Zinc transporter ZIP11 (slc39a11) of Xenopus tropicalis (Western clawed frog).